We begin with the raw amino-acid sequence, 165 residues long: Cyclic pyranopterin monophosphate synthase (165 aa).

Substrate-binding positions include 76 to 78 and 113 to 114; these read MCH and IE. Residue Asp128 is part of the active site.

This sequence belongs to the MoaC family. Homohexamer; trimer of dimers.

The catalysed reaction is (8S)-3',8-cyclo-7,8-dihydroguanosine 5'-triphosphate = cyclic pyranopterin phosphate + diphosphate. Its pathway is cofactor biosynthesis; molybdopterin biosynthesis. Its function is as follows. Catalyzes the conversion of (8S)-3',8-cyclo-7,8-dihydroguanosine 5'-triphosphate to cyclic pyranopterin monophosphate (cPMP). This Limosilactobacillus fermentum (strain NBRC 3956 / LMG 18251) (Lactobacillus fermentum) protein is Cyclic pyranopterin monophosphate synthase.